A 297-amino-acid polypeptide reads, in one-letter code: NAD(P)-dependent methylenetetrahydromethanopterin dehydrogenase (297 aa).

To M.extorquens MtdA. In terms of assembly, homohexamer.

The protein resides in the cytoplasm. The enzyme catalyses 5,10-methylenetetrahydromethanopterin + NAD(+) = 5,10-methenyl-5,6,7,8-tetrahydromethanopterin + NADH. It catalyses the reaction 5,10-methylenetetrahydromethanopterin + NADP(+) = 5,10-methenyl-5,6,7,8-tetrahydromethanopterin + NADPH. Its pathway is one-carbon metabolism; formaldehyde degradation; formate from formaldehyde (H(4)MPT route): step 2/5. Functionally, catalyzes the dehydrogenation of methylene-H(4)MPT. This is NAD(P)-dependent methylenetetrahydromethanopterin dehydrogenase (mtdB) from Methylorubrum extorquens (strain ATCC 14718 / DSM 1338 / JCM 2805 / NCIMB 9133 / AM1) (Methylobacterium extorquens).